We begin with the raw amino-acid sequence, 268 residues long: Undecaprenyl-diphosphatase (268 aa).

7 consecutive transmembrane segments (helical) span residues 47–67 (FAVL…FAKL), 83–103 (FVIG…VAGS), 109–129 (LFNP…LLWV), 144–164 (FPLP…IPGV), 184–204 (AAEF…VYDF), 218–238 (IVAI…KTFL), and 246–266 (FELF…ALAM).

Belongs to the UppP family.

The protein resides in the cell inner membrane. It carries out the reaction di-trans,octa-cis-undecaprenyl diphosphate + H2O = di-trans,octa-cis-undecaprenyl phosphate + phosphate + H(+). Catalyzes the dephosphorylation of undecaprenyl diphosphate (UPP). Confers resistance to bacitracin. In Rhodopseudomonas palustris (strain BisB5), this protein is Undecaprenyl-diphosphatase.